Reading from the N-terminus, the 426-residue chain is Crinkler effector protein 4 (426 aa).

Residues 20 to 57 (VEIDDSAKVSKLKKVIKEENPATITCDAKDLQLFLAKK) form an LQLFLAK domain region. Residues 59-107 (DAWLDGAGAAAVELDEHGHPQGCVQMDPTLWVKNPKHFGDNFQPGEGQV) form a DWL domain region. An HVLVXXP motif motif is present at residues 108–114 (HVLVVVP). The effector domain stretch occupies residues 115-426 (EGVVGSASET…RSIPTLSYFS (312 aa)).

This sequence belongs to the Crinkler effector family.

It localises to the secreted. It is found in the host nucleus. In terms of biological role, secreted effector that is critical to pathogenesis by suppressing plant immune responsess. Promotes Phytophthora infection by suppressing the H(2)O(2) accumulation and callose deposition. May induce cell death by regulating expression of cell death-related genes. The sequence is that of Crinkler effector protein 4 from Phytophthora capsici.